Consider the following 230-residue polypeptide: Cytidylate kinase (230 aa).

12–20 (GPSGAGKGT) is a binding site for ATP.

This sequence belongs to the cytidylate kinase family. Type 1 subfamily.

Its subcellular location is the cytoplasm. The catalysed reaction is CMP + ATP = CDP + ADP. It carries out the reaction dCMP + ATP = dCDP + ADP. In Shewanella sp. (strain MR-4), this protein is Cytidylate kinase.